Reading from the N-terminus, the 374-residue chain is Large ribosomal subunit protein bL27m (374 aa).

Residues 1–41 constitute a mitochondrion transit peptide; sequence MLRLSGVKSAVRARAAAGAAFSVSLSGPQAVSLLALPLVRH.

It belongs to the bacterial ribosomal protein bL27 family.

It localises to the mitochondrion. Component of the large subunit of mitochondrial ribosome. This Yarrowia lipolytica (strain CLIB 122 / E 150) (Yeast) protein is Large ribosomal subunit protein bL27m (MRPL2).